The following is an 849-amino-acid chain: Serine/threonine-protein phosphatase 4 regulatory subunit 3B (849 aa).

A WH1 domain is found at 1–100; sequence MSDTRRRVKV…DEIWEKICQV (100 aa). Phosphoserine is present on residues S117 and S695. The span at 714–724 shows a compositional bias: acidic residues; the sequence is EMWFNEDEEEE. Positions 714–849 are disordered; that stretch reads EMWFNEDEEE…SPRKRPRLGS (136 aa). Over residues 733–764 the composition is skewed to basic and acidic residues; it reads EKPKPEDDFPDNYEKFMETKKAKESEDKENLP. Residues 776-818 are compositionally biased toward polar residues; sequence FSHSASAANGTNSKSVVAQIPPATSNGSSSKTTNLPTSVTATK. Positions 827 to 838 are enriched in acidic residues; sequence YPDDEEEDEEEE. At S840 the chain carries Phosphoserine.

Belongs to the SMEK family. In terms of assembly, serine/threonine-protein phosphatase 4 (PP4) occurs in different assemblies of the catalytic and one or more regulatory subunits. Component of the PP4 complex PPP4C-PPP4R2-PPP4R3B. Moderately expressed in tissues and specific brain regions examined.

Its subcellular location is the cytoplasm. It localises to the cytoskeleton. The protein resides in the microtubule organizing center. It is found in the centrosome. The protein localises to the nucleus. Its function is as follows. Regulatory subunit of serine/threonine-protein phosphatase 4 (PP4). May regulate the activity of PPP4C at centrosomal microtubule organizing centers. This is Serine/threonine-protein phosphatase 4 regulatory subunit 3B from Homo sapiens (Human).